The chain runs to 207 residues: Casparian strip membrane protein 1 (207 aa).

N-acetylalanine is present on A2. The Cytoplasmic segment spans residues 2–44 (AKESTTIDVGEPNTMTKSTSHVVVDEKKKKGFVAAAAGGGYKR). The helical transmembrane segment at 45-65 (GLAVFDFLLRLAAIGITIGAS) threads the bilayer. Topologically, residues 66-95 (SVMFTAEETLPFFTQFLQFQAGYDDFPTFQ) are extracellular. The chain crosses the membrane as a helical span at residues 96-116 (FFVIAIAIVASYLVLSLPFSI). The Cytoplasmic segment spans residues 117–128 (VTIVRPLAVAPR). A helical membrane pass occupies residues 129–149 (LILLISDTVVLTLTTAAAAAA). Residues 150-181 (ASIVYLAHNGNTNTNWLPICQQFGDFCQTAST) lie on the Extracellular side of the membrane. Residues 182 to 202 (AVVAASISVAFFVLLIVISAI) form a helical membrane-spanning segment. Residues 203–207 (ALKRH) lie on the Cytoplasmic side of the membrane.

Belongs to the Casparian strip membrane proteins (CASP) family. In terms of assembly, homodimer and heterodimers.

It localises to the cell membrane. Functionally, regulates membrane-cell wall junctions and localized cell wall deposition. Required for establishment of the Casparian strip membrane domain (CSD) and the subsequent formation of Casparian strips, a cell wall modification of the root endodermis that determines an apoplastic barrier between the intraorganismal apoplasm and the extraorganismal apoplasm and prevents lateral diffusion. This chain is Casparian strip membrane protein 1, found in Raphanus raphanistrum (Wild radish).